A 341-amino-acid chain; its full sequence is tRNA N6-adenosine threonylcarbamoyltransferase (341 aa).

Residues H112 and H116 each coordinate Fe cation. Substrate is bound by residues 138–142 (TVSGG), D171, G184, D188, and N279. D307 contributes to the Fe cation binding site.

This sequence belongs to the KAE1 / TsaD family. Fe(2+) serves as cofactor.

Its subcellular location is the cytoplasm. It carries out the reaction L-threonylcarbamoyladenylate + adenosine(37) in tRNA = N(6)-L-threonylcarbamoyladenosine(37) in tRNA + AMP + H(+). In terms of biological role, required for the formation of a threonylcarbamoyl group on adenosine at position 37 (t(6)A37) in tRNAs that read codons beginning with adenine. Is involved in the transfer of the threonylcarbamoyl moiety of threonylcarbamoyl-AMP (TC-AMP) to the N6 group of A37, together with TsaE and TsaB. TsaD likely plays a direct catalytic role in this reaction. This is tRNA N6-adenosine threonylcarbamoyltransferase from Riemerella anatipestifer (Moraxella anatipestifer).